Here is a 197-residue protein sequence, read N- to C-terminus: Phosphoheptose isomerase (197 aa).

An SIS domain is found at 36–197; it reads MVNALLNEGK…IDSQLFGSEE (162 aa). Residue 51–53 coordinates substrate; sequence NGG. Zn(2+) is bound by residues H60 and E64. Residues E64, 93 to 94, 119 to 121, S124, and Q174 each bind substrate; these read ND and STS. Zn(2+)-binding residues include Q174 and H182.

The protein belongs to the SIS family. GmhA subfamily. As to quaternary structure, homotetramer. Zn(2+) serves as cofactor.

The protein localises to the cytoplasm. The catalysed reaction is 2 D-sedoheptulose 7-phosphate = D-glycero-alpha-D-manno-heptose 7-phosphate + D-glycero-beta-D-manno-heptose 7-phosphate. Its pathway is carbohydrate biosynthesis; D-glycero-D-manno-heptose 7-phosphate biosynthesis; D-glycero-alpha-D-manno-heptose 7-phosphate and D-glycero-beta-D-manno-heptose 7-phosphate from sedoheptulose 7-phosphate: step 1/1. Its function is as follows. Catalyzes the isomerization of sedoheptulose 7-phosphate in D-glycero-D-manno-heptose 7-phosphate. This Pseudomonas putida (strain W619) protein is Phosphoheptose isomerase.